A 333-amino-acid polypeptide reads, in one-letter code: UDP-N-acetylenolpyruvoylglucosamine reductase (333 aa).

One can recognise an FAD-binding PCMH-type domain in the interval 12–176; that stretch reads LPAQCRALIE…TSVVFRLPKD (165 aa). Arg153 is a catalytic residue. The Proton donor role is filled by Ser221. Glu317 is a catalytic residue.

The protein belongs to the MurB family. FAD serves as cofactor.

Its subcellular location is the cytoplasm. The enzyme catalyses UDP-N-acetyl-alpha-D-muramate + NADP(+) = UDP-N-acetyl-3-O-(1-carboxyvinyl)-alpha-D-glucosamine + NADPH + H(+). Its pathway is cell wall biogenesis; peptidoglycan biosynthesis. Its function is as follows. Cell wall formation. The polypeptide is UDP-N-acetylenolpyruvoylglucosamine reductase (Idiomarina loihiensis (strain ATCC BAA-735 / DSM 15497 / L2-TR)).